The following is an 800-amino-acid chain: Phenylalanine--tRNA ligase beta subunit (800 aa).

Positions Ala39–Phe152 constitute a tRNA-binding domain. The 76-residue stretch at Thr405–Thr480 folds into the B5 domain. Mg(2+) contacts are provided by Asp458, Asp464, Glu467, and Glu468. One can recognise an FDX-ACB domain in the interval Thr707–Arg800.

The protein belongs to the phenylalanyl-tRNA synthetase beta subunit family. Type 1 subfamily. As to quaternary structure, tetramer of two alpha and two beta subunits. Requires Mg(2+) as cofactor.

It localises to the cytoplasm. The catalysed reaction is tRNA(Phe) + L-phenylalanine + ATP = L-phenylalanyl-tRNA(Phe) + AMP + diphosphate + H(+). In Streptococcus pneumoniae (strain ATCC BAA-255 / R6), this protein is Phenylalanine--tRNA ligase beta subunit.